The chain runs to 280 residues: Bis(5'-nucleosyl)-tetraphosphatase, symmetrical (280 aa).

The protein belongs to the Ap4A hydrolase family.

It catalyses the reaction P(1),P(4)-bis(5'-adenosyl) tetraphosphate + H2O = 2 ADP + 2 H(+). Its function is as follows. Hydrolyzes diadenosine 5',5'''-P1,P4-tetraphosphate to yield ADP. In Paracidovorax citrulli (strain AAC00-1) (Acidovorax citrulli), this protein is Bis(5'-nucleosyl)-tetraphosphatase, symmetrical.